Here is a 173-residue protein sequence, read N- to C-terminus: Chorion protein S19 (173 aa).

An N-terminal signal peptide occupies residues 1-21; it reads MNKFATLAVIFCACIVGSCYA.

The protein belongs to the chorion protein S19 family.

The protein localises to the secreted. Functionally, chorion membrane (egg shell) protein; plays a role in protecting the egg from the environment. This is Chorion protein S19 (Cp19) from Drosophila melanogaster (Fruit fly).